The following is a 99-amino-acid chain: Acylphosphatase-1 (99 aa).

Position 2 is an N-acetylalanine (Ala2). Residues 9 to 99 (SVDYEIFGKV…LDYSDFQIVK (91 aa)) enclose the Acylphosphatase-like domain. Catalysis depends on residues Arg24 and Asn42.

This sequence belongs to the acylphosphatase family. In terms of tissue distribution, organ-common type isozyme is found in many different tissues.

The catalysed reaction is an acyl phosphate + H2O = a carboxylate + phosphate + H(+). This is Acylphosphatase-1 (ACYP1) from Homo sapiens (Human).